The following is an 844-amino-acid chain: MEPPAAPSERSLSLSLPGPREGQATLKPPPQHLWRQPRTPIRIQQRGYPDSAERSETERSPHRPIERADAVDTGDRPGLRTTRMSWPSSFHGTGTGGGSSRRLEAENGPTPSPGRSPLDSQASPGLVLHAGATTSQRRESFLYRSDSDYDMSPKAVSRSSSVASEAHAEDLIVTPFAQVLASLRSVRSNFSLLTNVPIPSNKRSPLGGPPSVCKATLSEETCQQLARETLEELDWCLEQLETMQTYRSVSEMASHKFKRMLNRELTHLSEMSRSGNQVSEYISNTFLDKQNEVEIPSPTPRQRAFQQPPPSVLRQSQPMSQITGLKKLVHTGSLNTNVPRFGVKTDQEDLLAQELENLSKWGLNIFCVSEYAGGRSLSCIMYTIFQERDLLKKFHIPVDTMMMYMLTLEDHYHADVAYHNSLHAADVLQSTHVLLATPALDAVFTDLEILAALFAAAIHDVDHPGVSNQFLINTNSELALMYNDESVLENHHLAVGFKLLQEENCDIFQNLSKRQRQSLRKMVIDMVLATDMSKHMTLLADLKTMVETKKVTSSGVLLLDNYSDRIQVLRNMVHCADLSNPTKPLELYRQWTDRIMAEFFQQGDRERERGMEISPMCDKHTASVEKSQVGFIDYIVHPLWETWADLVHPDAQDILDTLEDNRDWYHSAIRQSPSPPLEEEPGGLGHPSLPDKFQFELTLEEEEEEDSLEVPGLPTTEETFLAAEDARAQAVDWSKVKGPSTTVVEVAERLKQETASAYGAPQESMEAVGCSFSPGTPILPDVRTLSSSEEAPGLLGLPSTAAEVEAPRDHLAATRACSACSGTSGDNSAIISAPGRWGSGGDPA.

Residues 1 to 124 form a disordered region; the sequence is MEPPAAPSER…RSPLDSQASP (124 aa). Ser13 carries the post-translational modification Phosphoserine. Residues 36-46 show a composition bias toward low complexity; the sequence is QPRTPIRIQQR. The segment covering 51–78 has biased composition (basic and acidic residues); the sequence is SAERSETERSPHRPIERADAVDTGDRPG. Residues 82-91 show a composition bias toward polar residues; sequence TRMSWPSSFH. Ser147 is subject to Phosphoserine; by MAPKAPK2. Phosphoserine is present on residues Ser152, Ser160, and Ser204. Positions 296–317 are disordered; that stretch reads PSPTPRQRAFQQPPPSVLRQSQ. Ser333 bears the Phosphoserine mark. The PDEase domain maps to 343-672; it reads VKTDQEDLLA…DWYHSAIRQS (330 aa). Lys344 is covalently cross-linked (Glycyl lysine isopeptide (Lys-Gly) (interchain with G-Cter in SUMO)). Residue His419 is the Proton donor of the active site. Residue His419 participates in 3',5'-cyclic AMP binding. AMP is bound by residues His419 and His423. Residues His423, His459, Asp460, and Asp577 each contribute to the Zn(2+) site. AMP contacts are provided by Asp460, Asp577, Gln628, and Phe631. Residue Asp460 participates in Mg(2+) binding. Residue Asp460 participates in Mn(2+) binding. 3',5'-cyclic AMP contacts are provided by Gln628 and Phe631. 2 disordered regions span residues 668-690 and 818-844; these read AIRQSPSPPLEEEPGGLGHPSLP and SACSGTSGDNSAIISAPGRWGSGGDPA. A phosphoserine mark is found at Ser672 and Ser674. Polar residues predominate over residues 820 to 830; sequence CSGTSGDNSAI.

The protein belongs to the cyclic nucleotide phosphodiesterase family. PDE4 subfamily. Interacts with LYN (via SH3 domain). Interacts with ARRB2. Zn(2+) serves as cofactor. It depends on Mg(2+) as a cofactor. Requires Mn(2+) as cofactor. Phosphorylated by MAPKAPK2 at Ser-147; it counteracts PKA-induced activation of PDE4A and modulates intracellular cAMP levels. Likely involved in cellular desensitization to cAMP signaling. Post-translationally, proteolytically cleaved by CASP3. Isoform 2 is testis specific.

The protein localises to the cytoplasm. The protein resides in the cytosol. Its subcellular location is the membrane. It catalyses the reaction 3',5'-cyclic AMP + H2O = AMP + H(+). Its pathway is purine metabolism; 3',5'-cyclic AMP degradation; AMP from 3',5'-cyclic AMP: step 1/1. Inhibited by rolipram. Functionally, hydrolyzes the second messenger 3',5'-cyclic AMP (cAMP), which is a key regulator of many important physiological processes. Efficiently hydrolyzes cAMP. This chain is 3',5'-cyclic-AMP phosphodiesterase 4A (Pde4a), found in Rattus norvegicus (Rat).